The primary structure comprises 365 residues: tRNA/tmRNA (uracil-C(5))-methyltransferase (365 aa).

S-adenosyl-L-methionine-binding residues include Q189, Y217, N222, E238, and D298. C323 serves as the catalytic Nucleophile. Residue E357 is the Proton acceptor of the active site.

Belongs to the class I-like SAM-binding methyltransferase superfamily. RNA M5U methyltransferase family. TrmA subfamily.

It catalyses the reaction uridine(54) in tRNA + S-adenosyl-L-methionine = 5-methyluridine(54) in tRNA + S-adenosyl-L-homocysteine + H(+). It carries out the reaction uridine(341) in tmRNA + S-adenosyl-L-methionine = 5-methyluridine(341) in tmRNA + S-adenosyl-L-homocysteine + H(+). Dual-specificity methyltransferase that catalyzes the formation of 5-methyluridine at position 54 (m5U54) in all tRNAs, and that of position 341 (m5U341) in tmRNA (transfer-mRNA). This chain is tRNA/tmRNA (uracil-C(5))-methyltransferase, found in Saccharophagus degradans (strain 2-40 / ATCC 43961 / DSM 17024).